Consider the following 529-residue polypeptide: Cytochrome P450 monooxygenase CLM2 (529 aa).

Residues 2–19 form a helical membrane-spanning segment; the sequence is LLIIVVLVGTLIYFLSFH. 2 N-linked (GlcNAc...) asparagine glycosylation sites follow: Asn-244 and Asn-281. Cys-438 is a binding site for heme.

This sequence belongs to the cytochrome P450 family. Heme is required as a cofactor.

Its subcellular location is the membrane. The catalysed reaction is (-)-longiborneol + reduced [NADPH--hemoprotein reductase] + O2 = culmorin + oxidized [NADPH--hemoprotein reductase] + H2O + H(+). It functions in the pathway mycotoxin biosynthesis. Its function is as follows. Cytochrome P450 monooxygenase involved in the biosynthesis of culmorin, a tricyclic sesquiterpene diol reported to have antifungal activity and some phytotoxicity to wheat coleoptile tissue, contributing to Fusarium head blight disease. The terpene cyclase CLM1 is responsible for the cyclization of farnesyl diphosphate into the intermediate longiborneol. Longiborneol is then hydroxylated in a regio- and endo-stereoselective manner at position C-11 by the cytochrome P450 monooxygenase CLM2 to produce culmorin. Additional non-specific oxygenases are also able to hydroxylate longiborneol at other sites than C-11 leading to 3-hydroxylongiborneol, 5-hydroxylongiborneol, 12-hydroxylongiborneol and 15-hydroxylongiborneol. Moreover, another oxygenase capable of installing a C-11 exo-hydroxy group in longiborneol can also yield 11-epi-acetylculmorin. The production of these longiborneol derivatives is dwarfed by the high abundance of culmorin, suggesting that CLM2 displays superior enzymatic activity to the unidentified, possibly promiscuous, additional oxygenases. This chain is Cytochrome P450 monooxygenase CLM2, found in Gibberella zeae (strain ATCC MYA-4620 / CBS 123657 / FGSC 9075 / NRRL 31084 / PH-1) (Wheat head blight fungus).